The following is a 615-amino-acid chain: uncharacterized protein (615 aa).

Catalysis depends on aspartate 403, which acts as the Proton acceptor. Glutamate 406 (proton donor) is an active-site residue.

Belongs to the glycosyl hydrolase 15 family.

This is an uncharacterized protein from Methanocaldococcus jannaschii (strain ATCC 43067 / DSM 2661 / JAL-1 / JCM 10045 / NBRC 100440) (Methanococcus jannaschii).